The chain runs to 424 residues: CinA-like protein (424 aa).

Belongs to the CinA family.

In Shewanella woodyi (strain ATCC 51908 / MS32), this protein is CinA-like protein.